We begin with the raw amino-acid sequence, 573 residues long: Proline--tRNA ligase (573 aa).

Belongs to the class-II aminoacyl-tRNA synthetase family. ProS type 1 subfamily. As to quaternary structure, homodimer.

Its subcellular location is the cytoplasm. It catalyses the reaction tRNA(Pro) + L-proline + ATP = L-prolyl-tRNA(Pro) + AMP + diphosphate. In terms of biological role, catalyzes the attachment of proline to tRNA(Pro) in a two-step reaction: proline is first activated by ATP to form Pro-AMP and then transferred to the acceptor end of tRNA(Pro). As ProRS can inadvertently accommodate and process non-cognate amino acids such as alanine and cysteine, to avoid such errors it has two additional distinct editing activities against alanine. One activity is designated as 'pretransfer' editing and involves the tRNA(Pro)-independent hydrolysis of activated Ala-AMP. The other activity is designated 'posttransfer' editing and involves deacylation of mischarged Ala-tRNA(Pro). The misacylated Cys-tRNA(Pro) is not edited by ProRS. This is Proline--tRNA ligase from Chromohalobacter salexigens (strain ATCC BAA-138 / DSM 3043 / CIP 106854 / NCIMB 13768 / 1H11).